A 704-amino-acid chain; its full sequence is Elongation factor G (704 aa).

Residues 10 to 290 (NKVRNIGIMA…AVVDFLPNPL (281 aa)) enclose the tr-type G domain. Residues 19 to 26 (AHIDAGKT), 83 to 87 (DTPGH), and 137 to 140 (NKMD) contribute to the GTP site.

The protein belongs to the TRAFAC class translation factor GTPase superfamily. Classic translation factor GTPase family. EF-G/EF-2 subfamily.

The protein resides in the cytoplasm. Functionally, catalyzes the GTP-dependent ribosomal translocation step during translation elongation. During this step, the ribosome changes from the pre-translocational (PRE) to the post-translocational (POST) state as the newly formed A-site-bound peptidyl-tRNA and P-site-bound deacylated tRNA move to the P and E sites, respectively. Catalyzes the coordinated movement of the two tRNA molecules, the mRNA and conformational changes in the ribosome. The polypeptide is Elongation factor G (Paenarthrobacter aurescens (strain TC1)).